We begin with the raw amino-acid sequence, 640 residues long: Cytochrome P450 monooxygenase cyp1 (640 aa).

N71 carries an N-linked (GlcNAc...) asparagine glycan. A helical membrane pass occupies residues 120–139; that stretch reads LLVFLVGLFLGTIYLLYRYW. N350 is a glycosylation site (N-linked (GlcNAc...) asparagine). C572 is a binding site for heme.

The protein belongs to the cytochrome P450 family. Requires heme as cofactor.

It localises to the membrane. It functions in the pathway secondary metabolite biosynthesis. Functionally, cytochrome P450 monooxygenase; part of the gene cluster that mediates the biosynthesis of the glycolipid biosurfactant ustilagic acid (UA). UA is a secreted cellobiose glycolipid that is toxic for many microorganisms and confers biocontrol activity to U.maydis. UA consists of 15,16-dihydroxypalmitic or 2,15,16-trihydroxypalmitic acid, which is O-glycosidically linked to cellobiose at its terminal hydroxyl group. In addition, the cellobiose moiety is acetylated and acylated with a short-chain hydroxy fatty acid. UA biosynthesis starts with omega-hydroxylation of palmitic acid catalyzed by the cytochrome P450 monooxygenase cyp1. Terminal hydroxylation of palmitic acid precedes subterminal hydroxylation catalyzed by the cytochrome P450 monooxygenase cyp2. Sequential glucosylation of the hydroxy fatty acid is probably catalyzed by the glycosyltransferase ugt1. The cellobiose lipid is further decorated by acetylation of the proximal glucose residue and by acylation with a short-chain beta-hydroxy fatty acid at the distal glucose residue. The acyltransferase uat1 may be a good candidate for catalyzing either acetylation or acylation of the cellobiose lipid. The fatty acid synthase fas2 may be involved in synthesis of the carbon backbone of the short-chain beta-hydroxy fatty acid esterified to the cellobiose disaccharide. The secreted UA consists of a mixture of both alpha-hydroxylated and non-hydroxylated glycolipids; therefore, alpha-hydroxylation of the long-chain fatty, catalyzed by the fatty acid hydroxylase ahd1, occurs late in UA biosynthesis and may be the last step before secretion. In Mycosarcoma maydis (Corn smut fungus), this protein is Cytochrome P450 monooxygenase cyp1.